We begin with the raw amino-acid sequence, 520 residues long: Laccase (520 aa).

The N-terminal stretch at 1 to 21 (MSRFQSLLAFVVASLAAVAHA) is a signal peptide. Plastocyanin-like domains follow at residues 23–148 (IGPT…FVVY) and 160–302 (VDND…ILRY). N-linked (GlcNAc...) asparagine glycosylation is found at N72 and N75. Cu cation is bound by residues H85, H87, H130, and H132. Cystine bridges form between C106–C509 and C138–C226. N210, N229, and N354 each carry an N-linked (GlcNAc...) asparagine glycan. One can recognise a Plastocyanin-like 3 domain in the interval 369-491 (TVPVLLQIIS…AGFAVVFAED (123 aa)). Cu cation is bound by residues H416, H419, H421, H473, C474, H475, and H479.

The protein belongs to the multicopper oxidase family. Cu cation is required as a cofactor.

It localises to the secreted. The enzyme catalyses 4 hydroquinone + O2 = 4 benzosemiquinone + 2 H2O. Lignin degradation and detoxification of lignin-derived products. Has activity towards guaiacol. The protein is Laccase of Trametes hirsuta (White-rot fungus).